The chain runs to 492 residues: Protein nucleotidyltransferase YdiU (492 aa).

ATP-binding residues include glycine 88, glycine 90, arginine 91, lysine 111, aspartate 123, glycine 124, arginine 174, and arginine 181. Aspartate 250 (proton acceptor) is an active-site residue. Positions 251 and 260 each coordinate Mg(2+). Aspartate 260 lines the ATP pocket.

This sequence belongs to the SELO family. Mg(2+) serves as cofactor. It depends on Mn(2+) as a cofactor.

The enzyme catalyses L-seryl-[protein] + ATP = 3-O-(5'-adenylyl)-L-seryl-[protein] + diphosphate. It carries out the reaction L-threonyl-[protein] + ATP = 3-O-(5'-adenylyl)-L-threonyl-[protein] + diphosphate. It catalyses the reaction L-tyrosyl-[protein] + ATP = O-(5'-adenylyl)-L-tyrosyl-[protein] + diphosphate. The catalysed reaction is L-histidyl-[protein] + UTP = N(tele)-(5'-uridylyl)-L-histidyl-[protein] + diphosphate. The enzyme catalyses L-seryl-[protein] + UTP = O-(5'-uridylyl)-L-seryl-[protein] + diphosphate. It carries out the reaction L-tyrosyl-[protein] + UTP = O-(5'-uridylyl)-L-tyrosyl-[protein] + diphosphate. Functionally, nucleotidyltransferase involved in the post-translational modification of proteins. It can catalyze the addition of adenosine monophosphate (AMP) or uridine monophosphate (UMP) to a protein, resulting in modifications known as AMPylation and UMPylation. This is Protein nucleotidyltransferase YdiU from Rhodopseudomonas palustris (strain ATCC BAA-98 / CGA009).